Consider the following 349-residue polypeptide: Mitogen-activated protein kinase sty1 (349 aa).

One can recognise a Protein kinase domain in the interval 20–299 (YSDLQPIGMG…AADALAHNYL (280 aa)). Residues 26 to 34 (IGMGAFGLV) and lysine 49 each bind ATP. Aspartate 141 (proton acceptor) is an active-site residue. Threonine 171 is modified (phosphothreonine). The TXY motif lies at 171–173 (TGY). Tyrosine 173 bears the Phosphotyrosine mark. The residue at position 175 (serine 175) is a Phosphoserine. Threonine 176 is modified (phosphothreonine). The TXY motif lies at 176–178 (TRY).

This sequence belongs to the protein kinase superfamily. Ser/Thr protein kinase family. MAP kinase subfamily. HOG1 sub-subfamily. In terms of assembly, interacts with cdc37, cmk2, hal4, sin1 and srk1. The cofactor is Mg(2+). Post-translationally, dually phosphorylated on Thr-171 and Tyr-173, which activates the enzyme. Phosphorylated by wis1 in response to osmotic stress, nutrient limitation, hydrogen peroxide and arsenite. Dephosphorylated by pyp1 and pyp2.

It is found in the cytoplasm. It localises to the nucleus. The catalysed reaction is L-seryl-[protein] + ATP = O-phospho-L-seryl-[protein] + ADP + H(+). It catalyses the reaction L-threonyl-[protein] + ATP = O-phospho-L-threonyl-[protein] + ADP + H(+). With respect to regulation, activated by the MAPK kinase wisl, and negatively regulated by pypl and pyp2 tyrosine phosphatases. Functionally, proline-directed serine/threonine-protein kinase involved in a signal transduction pathway that is activated by changes in the osmolarity of the extracellular environment. Controls osmotic regulation of transcription of target genes. Involved in osmoregulation and stress response pathways leading to an efficient start of sexual differentiation. Supports translation initiation and facilitates adaptation to environmental stress in part through reducing eIF2-alpha phosphorylation. Links the cell-cycle G2/M control with changes in the extracellular environment that affect cell physiology. Phosphorylates atf1 and mkp1. In conjunction with hal4, has a role in the cellular resistance to toxic cations such as Na(+), Li(+) and Ca(2+). Involved in resistance to arsenite, methylglyoxal and hydrogen peroxide. Involved in induction of thermotolerance in mRNA export, as well as in vacuolar fission. The polypeptide is Mitogen-activated protein kinase sty1 (sty1) (Schizosaccharomyces pombe (strain 972 / ATCC 24843) (Fission yeast)).